The following is a 551-amino-acid chain: Hedycaryol synthase TPS20CT (551 aa).

The (2E,6E)-farnesyl diphosphate site is built by R266, D303, D307, R444, and D447. Mg(2+) is bound by residues D303 and D307. A DDXXD motif motif is present at residues D303 to D307. Positions 447, 451, and 455 each coordinate Mg(2+).

This sequence belongs to the terpene synthase family. Tpsb subfamily. The cofactor is Mg(2+). Requires Mn(2+) as cofactor. In terms of tissue distribution, highly expressed in glandular trichomes.

It carries out the reaction (2E,6E)-farnesyl diphosphate + H2O = (2E,6E)-hedycaryol + diphosphate. The protein operates within secondary metabolite biosynthesis; terpenoid biosynthesis. Its function is as follows. Involved in sesquiterpene olefins biosynthesis, constituants of cannabinoids and terpenoids-rich resins. Catalyzes primarily the conversion of (2E)-farnesyl diphosphate to hedycaryol, which is spontaneously converted to elemol as a thermal degradation product. The protein is Hedycaryol synthase TPS20CT of Cannabis sativa (Hemp).